Consider the following 494-residue polypeptide: Lysine--tRNA ligase (494 aa).

Glu399 and Glu406 together coordinate Mg(2+).

Belongs to the class-II aminoacyl-tRNA synthetase family. The cofactor is Mg(2+).

Its subcellular location is the cytoplasm. The enzyme catalyses tRNA(Lys) + L-lysine + ATP = L-lysyl-tRNA(Lys) + AMP + diphosphate. The polypeptide is Lysine--tRNA ligase (lysS) (Saccharolobus solfataricus (strain ATCC 35092 / DSM 1617 / JCM 11322 / P2) (Sulfolobus solfataricus)).